A 197-amino-acid chain; its full sequence is Dephospho-CoA kinase (197 aa).

Positions 3 to 197 constitute a DPCK domain; sequence IIGLTGGIAS…IEEIWAKRFP (195 aa). ATP is bound at residue 11–16; that stretch reads ASGKST.

This sequence belongs to the CoaE family.

The protein localises to the cytoplasm. The catalysed reaction is 3'-dephospho-CoA + ATP = ADP + CoA + H(+). Its pathway is cofactor biosynthesis; coenzyme A biosynthesis; CoA from (R)-pantothenate: step 5/5. Its function is as follows. Catalyzes the phosphorylation of the 3'-hydroxyl group of dephosphocoenzyme A to form coenzyme A. In Geobacter sulfurreducens (strain ATCC 51573 / DSM 12127 / PCA), this protein is Dephospho-CoA kinase.